The chain runs to 122 residues: Large ribosomal subunit protein uL14c (122 aa).

The protein belongs to the universal ribosomal protein uL14 family. As to quaternary structure, part of the 50S ribosomal subunit.

It localises to the plastid. It is found in the chloroplast. Its function is as follows. Binds to 23S rRNA. The polypeptide is Large ribosomal subunit protein uL14c (Physcomitrium patens (Spreading-leaved earth moss)).